Consider the following 1100-residue polypeptide: Exportin-T (1100 aa).

The protein belongs to the exportin family. In terms of assembly, interacts with GSP1, GSP2, NSP1, NUP2 and UTP8.

The protein resides in the nucleus. It is found in the cytoplasm. Its function is as follows. tRNA nucleus export receptor which facilitates tRNA translocation across the nuclear pore complex. Preferentially interacts with tRNAs with mature 5'- and 3'-termini and does not distinguish between intron-containing and spliced tRNAs. In the nucleus binds to tRNA and to the Ran-GTPases GSP1 or GSP2 in their active GTP-bound form. Docking of this trimeric complex to the nuclear pore complex (NPC) is mediated through binding to nucleoporins. Upon transit of a nuclear export complex into the cytoplasm, disassembling of the complex and hydrolysis of Ran-GTP to Ran-GDP cause release of the tRNA from the export receptor. The directionality of nuclear export is thought to be conferred by an asymmetric distribution of the GTP- and GDP-bound forms of Ran between the cytoplasm and nucleus. Involved in pre-tRNA splicing, probably by affecting the interaction of pre-tRNA with splicing endonuclease. The protein is Exportin-T (LOS1) of Saccharomyces cerevisiae (strain YJM789) (Baker's yeast).